Consider the following 860-residue polypeptide: DNA mismatch repair protein MutS (860 aa).

Residue 621-628 participates in ATP binding; it reads GPNMGGKS.

It belongs to the DNA mismatch repair MutS family.

In terms of biological role, this protein is involved in the repair of mismatches in DNA. It is possible that it carries out the mismatch recognition step. This protein has a weak ATPase activity. This is DNA mismatch repair protein MutS from Salmonella arizonae (strain ATCC BAA-731 / CDC346-86 / RSK2980).